A 219-amino-acid chain; its full sequence is Ribose-5-phosphate isomerase A (219 aa).

Substrate contacts are provided by residues 28–31 (TGST), 81–84 (DGAD), and 94–97 (KGGG). Catalysis depends on glutamate 103, which acts as the Proton acceptor. Lysine 121 contributes to the substrate binding site.

This sequence belongs to the ribose 5-phosphate isomerase family. Homodimer.

It carries out the reaction aldehydo-D-ribose 5-phosphate = D-ribulose 5-phosphate. Its pathway is carbohydrate degradation; pentose phosphate pathway; D-ribose 5-phosphate from D-ribulose 5-phosphate (non-oxidative stage): step 1/1. Functionally, catalyzes the reversible conversion of ribose-5-phosphate to ribulose 5-phosphate. The protein is Ribose-5-phosphate isomerase A of Photobacterium profundum (strain SS9).